Here is a 251-residue protein sequence, read N- to C-terminus: NADPH-dependent oxidoreductase (251 aa).

This sequence belongs to the flavin oxidoreductase frp family. It depends on FMN as a cofactor.

Functionally, reduces FMN, organic nitro compounds and disulfide DTNB. Involved in maintenance of the cellular redox state and the disulfide stress response. The polypeptide is NADPH-dependent oxidoreductase (nfrA) (Staphylococcus aureus (strain USA300)).